Reading from the N-terminus, the 405-residue chain is Argininosuccinate synthase (405 aa).

Residues Ala10–Ser18 and Ala37 each bind ATP. Residues Tyr88 and Ser93 each contribute to the L-citrulline site. Residue Gly118 participates in ATP binding. L-aspartate is bound by residues Thr120, Asn124, and Asp125. Asn124 serves as a coordination point for L-citrulline. Positions 128, 179, 188, 264, and 276 each coordinate L-citrulline.

Belongs to the argininosuccinate synthase family. Type 1 subfamily. Homotetramer.

Its subcellular location is the cytoplasm. The enzyme catalyses L-citrulline + L-aspartate + ATP = 2-(N(omega)-L-arginino)succinate + AMP + diphosphate + H(+). The protein operates within amino-acid biosynthesis; L-arginine biosynthesis; L-arginine from L-ornithine and carbamoyl phosphate: step 2/3. The sequence is that of Argininosuccinate synthase from Nitrosococcus oceani (strain ATCC 19707 / BCRC 17464 / JCM 30415 / NCIMB 11848 / C-107).